The sequence spans 126 residues: MPEPTKSAPAPKKGSKKAVTKAQKKDGKKRKRSRKESYSVYVYKVLKQVHPDTGISSKAMGIMNSFVNDIFERIAGEASRLAHYNKRSTITSREIQTAVRLLLPGELAKHAVSEGTKAVTKYTSSK.

A compositionally biased stretch (low complexity) spans 1–12 (MPEPTKSAPAPK). The tract at residues 1 to 36 (MPEPTKSAPAPKKGSKKAVTKAQKKDGKKRKRSRKE) is disordered. At P2 the chain carries N-acetylproline. Position 3 is an ADP-ribosyl glutamic acid (E3). Residue K6 is modified to N6-(2-hydroxyisobutyryl)lysine; alternate. K6 carries the post-translational modification N6-(beta-hydroxybutyryl)lysine; alternate. K6 is subject to N6-acetyllysine; alternate. At K6 the chain carries N6-butyryllysine; alternate. N6-crotonyllysine; alternate is present on K6. The residue at position 6 (K6) is an N6-lactoyllysine; alternate. Residue K6 forms a Glycyl lysine isopeptide (Lys-Gly) (interchain with G-Cter in SUMO2); alternate linkage. ADP-ribosylserine is present on S7. K12 carries the N6-(beta-hydroxybutyryl)lysine; alternate modification. K12 and K13 each carry N6-acetyllysine; alternate. N6-crotonyllysine; alternate occurs at positions 12 and 13. N6-lactoyllysine; alternate is present on K12. N6-(2-hydroxyisobutyryl)lysine; alternate is present on K13. S15 bears the Phosphoserine; by STK4/MST1 mark. 4 positions are modified to N6-acetyllysine; alternate: K16, K17, K21, and K24. N6-crotonyllysine; alternate is present on residues K16, K17, K21, and K24. N6-lactoyllysine; alternate occurs at positions 16, 17, 21, and 24. N6-(beta-hydroxybutyryl)lysine; alternate occurs at positions 17 and 21. Position 17 is an N6-glutaryllysine; alternate (K17). An N6-(2-hydroxyisobutyryl)lysine; alternate mark is found at K21 and K24. K21 carries the N6-butyryllysine; alternate modification. K21 participates in a covalent cross-link: Glycyl lysine isopeptide (Lys-Gly) (interchain with G-Cter in SUMO2); alternate. K25 bears the N6-(2-hydroxyisobutyryl)lysine mark. Position 35 is an N6-(2-hydroxyisobutyryl)lysine; alternate (K35). K35 carries the post-translational modification N6-(beta-hydroxybutyryl)lysine; alternate. At K35 the chain carries N6-crotonyllysine; alternate. K35 is subject to N6-glutaryllysine; alternate. K35 is modified (N6-succinyllysine; alternate). K35 is covalently cross-linked (Glycyl lysine isopeptide (Lys-Gly) (interchain with G-Cter in ubiquitin); alternate). E36 bears the PolyADP-ribosyl glutamic acid mark. S37 bears the Phosphoserine; by AMPK mark. An N6-(2-hydroxyisobutyryl)lysine; alternate mark is found at K44, K47, and K58. Position 44 is an N6-lactoyllysine; alternate (K44). N6-glutaryllysine; alternate is present on residues K44 and K47. N6-methyllysine; alternate is present on K47. Residue K58 is modified to N6,N6-dimethyllysine; alternate. R80 carries the dimethylated arginine modification. The residue at position 86 (K86) is an N6-(2-hydroxyisobutyryl)lysine; alternate. K86 is subject to N6-(beta-hydroxybutyryl)lysine; alternate. K86 carries the N6-acetyllysine; alternate modification. Position 86 is an N6-lactoyllysine; alternate (K86). An N6,N6,N6-trimethyllysine; alternate modification is found at K86. Omega-N-methylarginine occurs at positions 87 and 93. K109 is modified (N6-(2-hydroxyisobutyryl)lysine; alternate). An N6-lactoyllysine; alternate modification is found at K109. Residue K109 is modified to N6-glutaryllysine; alternate. K109 carries the N6-methyllysine; alternate modification. S113 is a glycosylation site (O-linked (GlcNAc) serine). The residue at position 116 (T116) is a Phosphothreonine. N6-(2-hydroxyisobutyryl)lysine; alternate is present on residues K117 and K121. 2 positions are modified to N6-(beta-hydroxybutyryl)lysine; alternate: K117 and K121. K117 and K121 each carry N6-lactoyllysine; alternate. K117 and K121 each carry N6-glutaryllysine; alternate. N6-succinyllysine; alternate is present on residues K117 and K121. K117 carries the post-translational modification N6-malonyllysine; alternate. K117 carries the post-translational modification N6-methylated lysine; alternate. A Glycyl lysine isopeptide (Lys-Gly) (interchain with G-Cter in ubiquitin); alternate cross-link involves residue K121.

This sequence belongs to the histone H2B family. The nucleosome is a histone octamer containing two molecules each of H2A, H2B, H3 and H4 assembled in one H3-H4 heterotetramer and two H2A-H2B heterodimers. The octamer wraps approximately 147 bp of DNA. Monoubiquitination at Lys-35 (H2BK34Ub) by the MSL1/MSL2 dimer is required for histone H3 'Lys-4' (H3K4me) and 'Lys-79' (H3K79me) methylation and transcription activation at specific gene loci, such as HOXA9 and MEIS1 loci. Similarly, monoubiquitination at Lys-121 (H2BK120Ub) by the RNF20/40 complex gives a specific tag for epigenetic transcriptional activation and is also prerequisite for histone H3 'Lys-4' and 'Lys-79' methylation. It also functions cooperatively with the FACT dimer to stimulate elongation by RNA polymerase II. H2BK120Ub also acts as a regulator of mRNA splicing: deubiquitination by USP49 is required for efficient cotranscriptional splicing of a large set of exons. In terms of processing, phosphorylation at Ser-37 (H2BS36ph) by AMPK in response to stress promotes transcription. Phosphorylated on Ser-15 (H2BS14ph) by STK4/MST1 during apoptosis; which facilitates apoptotic chromatin condensation. Also phosphorylated on Ser-15 in response to DNA double strand breaks (DSBs), and in correlation with somatic hypermutation and immunoglobulin class-switch recombination. Post-translationally, glcNAcylation at Ser-113 promotes monoubiquitination of Lys-121. It fluctuates in response to extracellular glucose, and associates with transcribed genes. ADP-ribosylated by PARP1 or PARP2 on Ser-7 (H2BS6ADPr) in response to DNA damage. H2BS6ADPr promotes recruitment of CHD1L. Mono-ADP-ribosylated on Glu-3 (H2BE2ADPr) by PARP3 in response to single-strand breaks. Poly ADP-ribosylation on Glu-36 (H2BE35ADPr) by PARP1 regulates adipogenesis: it inhibits phosphorylation at Ser-37 (H2BS36ph), thereby blocking expression of pro-adipogenetic genes. In terms of processing, crotonylation (Kcr) is specifically present in male germ cells and marks testis-specific genes in post-meiotic cells, including X-linked genes that escape sex chromosome inactivation in haploid cells. Crotonylation marks active promoters and enhancers and confers resistance to transcriptional repressors. It is also associated with post-meiotically activated genes on autosomes. Post-translationally, lactylated in macrophages by EP300/P300 by using lactoyl-CoA directly derived from endogenous or exogenous lactate, leading to stimulates gene transcription.

Its subcellular location is the nucleus. It localises to the chromosome. Its function is as follows. Core component of nucleosome. Nucleosomes wrap and compact DNA into chromatin, limiting DNA accessibility to the cellular machineries which require DNA as a template. Histones thereby play a central role in transcription regulation, DNA repair, DNA replication and chromosomal stability. DNA accessibility is regulated via a complex set of post-translational modifications of histones, also called histone code, and nucleosome remodeling. The polypeptide is Histone H2B type 1-D (Homo sapiens (Human)).